A 228-amino-acid chain; its full sequence is Urease accessory protein UreF 1 (228 aa).

The protein belongs to the UreF family. As to quaternary structure, ureD, UreF and UreG form a complex that acts as a GTP-hydrolysis-dependent molecular chaperone, activating the urease apoprotein by helping to assemble the nickel containing metallocenter of UreC. The UreE protein probably delivers the nickel.

The protein resides in the cytoplasm. Functionally, required for maturation of urease via the functional incorporation of the urease nickel metallocenter. The polypeptide is Urease accessory protein UreF 1 (Brucella anthropi (strain ATCC 49188 / DSM 6882 / CCUG 24695 / JCM 21032 / LMG 3331 / NBRC 15819 / NCTC 12168 / Alc 37) (Ochrobactrum anthropi)).